A 658-amino-acid polypeptide reads, in one-letter code: MSRTIGSRVIFLILALFCCTENSRGKLVMQGSAGFFKGYRTLTSTKKHAYGQAFEDEIVPFKNSANDTVTSFSVTFFFAIAPEDKHKGAHGMAFVISPTRGITGASADQYLGIFNKANNGDSSNHVIAVELDINKDEEFGDINDNHVGININGMRSIKFAPAGYYDQEGQFKDLSLISGSLLRVTILYSQMEKQLNVTLSSPEEAYYPNKPLLSLNQDLSPYILENMYVGFSASTGSVRAMHYMLSWFVHGGVDVPNLDLGIPTFPPYPKEKSLVYRIVLVTSLALVLFVALVASALSIFFYRRHKKVKEVLEEWEIQCGPHRFAYKELFKATKGFKQLLGKGGFGQVFKGTLPGSDAEIAVKRISHDSKQGMQEFLAEISTIGRLRHQNLVRLQGYCRYKEELYLVYDFMPNGSLDKYLYHRANQEQLTWNQRFKIIKDIASALCYLHHEWVQVVIHRDIKPANVLIDHQMNARLGDFGLAKLYDQGYDPQTSRVAGTFWYIAPELIRSGRATTGTDVYAFGLFMLEVSCGRRLIERRTASDEVVLAEWTLKCWENGDILEAVNDGIRHEDNREQLELVLKLGVLCSHQAVAIRPDMSKVVQILGGDLQLPDNLLDIVKAEKVRMWSETSESVLGVLTSQGSIGTLTLTEPFTSRGR.

The signal sequence occupies residues 1 to 25; sequence MSRTIGSRVIFLILALFCCTENSRG. The legume-lectin like stretch occupies residues 26 to 248; that stretch reads KLVMQGSAGF…RAMHYMLSWF (223 aa). Topologically, residues 26–280 are extracellular; it reads KLVMQGSAGF…EKSLVYRIVL (255 aa). Asparagine 66 and asparagine 196 each carry an N-linked (GlcNAc...) asparagine glycan. Residues 281–301 form a helical membrane-spanning segment; that stretch reads VTSLALVLFVALVASALSIFF. Topologically, residues 302 to 658 are cytoplasmic; it reads YRRHKKVKEV…LTEPFTSRGR (357 aa). The Protein kinase domain maps to 334-592; sequence KGFKQLLGKG…LGVLCSHQAV (259 aa). Residues 340 to 348 and lysine 363 each bind ATP; that span reads LGKGGFGQV. The active-site Proton acceptor is the aspartate 460.

In the C-terminal section; belongs to the protein kinase superfamily. Ser/Thr protein kinase family. The protein in the N-terminal section; belongs to the leguminous lectin family.

Its subcellular location is the cell membrane. The catalysed reaction is L-seryl-[protein] + ATP = O-phospho-L-seryl-[protein] + ADP + H(+). The enzyme catalyses L-threonyl-[protein] + ATP = O-phospho-L-threonyl-[protein] + ADP + H(+). Functionally, involved in resistance response to the pathogenic oomycetes Phytophthora infestans and Phytophthora capsici and to the pathogenic bacteria Pseudomonas syringae. The polypeptide is L-type lectin-domain containing receptor kinase V.4 (Arabidopsis thaliana (Mouse-ear cress)).